A 315-amino-acid polypeptide reads, in one-letter code: tRNA pseudouridine synthase B (315 aa).

Asp-47 functions as the Nucleophile in the catalytic mechanism.

Belongs to the pseudouridine synthase TruB family. Type 1 subfamily.

It carries out the reaction uridine(55) in tRNA = pseudouridine(55) in tRNA. Functionally, responsible for synthesis of pseudouridine from uracil-55 in the psi GC loop of transfer RNAs. The sequence is that of tRNA pseudouridine synthase B from Shewanella pealeana (strain ATCC 700345 / ANG-SQ1).